Reading from the N-terminus, the 498-residue chain is Phosphoethanolamine N-methyltransferase 1 (498 aa).

6 residues coordinate S-adenosyl-L-homocysteine: Gly-68, Arg-73, Asp-89, Asp-115, Val-116, and Asn-134. Positions 167, 172, 173, 177, and 184 each coordinate phosphocholine. Residues 253 to 254 (QY) and Tyr-262 each bind N-methylethanolamine phosphate. Tyr-262 is a binding site for phosphocholine. S-adenosyl-L-homocysteine-binding residues include Val-271, Ser-272, Gly-298, Asp-320, Asp-346, Cys-347, and Arg-363. 5 residues coordinate phosphocholine: Tyr-394, Tyr-408, Arg-412, Tyr-414, and Lys-480. Residues Tyr-394, Tyr-408, 412–414 (RGY), and Lys-480 contribute to the N-methylethanolamine phosphate site.

The protein belongs to the class I-like SAM-binding methyltransferase superfamily. PEAMT family.

The catalysed reaction is phosphoethanolamine + S-adenosyl-L-methionine = N-methylethanolamine phosphate + S-adenosyl-L-homocysteine + H(+). It carries out the reaction N-methylethanolamine phosphate + S-adenosyl-L-methionine = N,N-dimethylethanolamine phosphate + S-adenosyl-L-homocysteine + H(+). The enzyme catalyses N,N-dimethylethanolamine phosphate + S-adenosyl-L-methionine = phosphocholine + S-adenosyl-L-homocysteine + H(+). It participates in phospholipid metabolism; phosphatidylcholine biosynthesis; phosphocholine from phosphoethanolamine: step 1/1. Inhibited by phosphatidic acid. Its function is as follows. Involved in phosphocholine biosynthesis. Catalyzes the N-methylation of phosphoethanolamine, phosphomonomethylethanolamine and phosphodimethylethanolamine, the three methylation steps required to convert phosphoethanolamine to phosphocholine (PC). This is Phosphoethanolamine N-methyltransferase 1 from Triticum aestivum (Wheat).